Here is a 287-residue protein sequence, read N- to C-terminus: ATP synthase gamma chain (287 aa).

Belongs to the ATPase gamma chain family. In terms of assembly, F-type ATPases have 2 components, CF(1) - the catalytic core - and CF(0) - the membrane proton channel. CF(1) has five subunits: alpha(3), beta(3), gamma(1), delta(1), epsilon(1). CF(0) has three main subunits: a, b and c.

It is found in the cell inner membrane. Functionally, produces ATP from ADP in the presence of a proton gradient across the membrane. The gamma chain is believed to be important in regulating ATPase activity and the flow of protons through the CF(0) complex. The polypeptide is ATP synthase gamma chain (Stenotrophomonas maltophilia (strain R551-3)).